The primary structure comprises 968 residues: RNA polymerase-associated protein RapA (968 aa).

Residues E164 to N334 form the Helicase ATP-binding domain. D177–T184 is a binding site for ATP. Residues D280–H283 carry the DEAH box motif. A Helicase C-terminal domain is found at W493 to D644.

It belongs to the SNF2/RAD54 helicase family. RapA subfamily. As to quaternary structure, interacts with the RNAP. Has a higher affinity for the core RNAP than for the holoenzyme. Its ATPase activity is stimulated by binding to RNAP.

Its function is as follows. Transcription regulator that activates transcription by stimulating RNA polymerase (RNAP) recycling in case of stress conditions such as supercoiled DNA or high salt concentrations. Probably acts by releasing the RNAP, when it is trapped or immobilized on tightly supercoiled DNA. Does not activate transcription on linear DNA. Probably not involved in DNA repair. This Sodalis glossinidius (strain morsitans) protein is RNA polymerase-associated protein RapA.